A 3912-amino-acid polypeptide reads, in one-letter code: Ubiquitin carboxyl-terminal hydrolase puf (3912 aa).

Disordered regions lie at residues 101-172 (AQQQ…HKSH), 518-590 (NVTA…ISPE), 660-688 (DVPSSDEADGEADGDGEGELLADSDECSD), 851-878 (VVSGGKQHHSPKASQGSSTSGSTPVQPS), and 1491-1611 (SRRG…PALS). Positions 106-133 (EQQRDEASAQAEAKESSAPAEEPKKEEP) are enriched in basic and acidic residues. Residues 134 to 143 (SGSAGEEAQG) are compositionally biased toward low complexity. A compositionally biased stretch (pro residues) spans 150 to 164 (KKPPVGPCTPPPPQT). The span at 522–532 (SSSDSGSIEGS) shows a compositional bias: low complexity. Residues 576–585 (ICDPTTEKGK) show a composition bias toward basic and acidic residues. The segment covering 660–687 (DVPSSDEADGEADGDGEGELLADSDECS) has biased composition (acidic residues). The span at 862-876 (KASQGSSTSGSTPVQ) shows a compositional bias: polar residues. Residues 1511–1520 (VKKSSMGRRR) show a composition bias toward basic residues. A compositionally biased stretch (polar residues) spans 1550–1567 (TPSTGLQDVETEASSSSG). A compositionally biased stretch (basic and acidic residues) spans 1583-1594 (KGETFEQEKERP). Over residues 1600-1609 (PPSPTPPPPA) the composition is skewed to pro residues. The USP domain occupies 2015-2380 (VGLTNLGATC…SAYMLFYERR (366 aa)). Cys2024 serves as the catalytic Nucleophile. Basic and acidic residues predominate over residues 2249–2263 (YKEERERRQKEKEGA). A disordered region spans residues 2249–2274 (YKEERERRQKEKEGADGSGDGNDNEK). Catalysis depends on His2305, which acts as the Proton acceptor. Disordered stretches follow at residues 2391 to 2529 (ELLV…TSKA), 3322 to 3344 (QQSQSQTQTPQSPQQKEKQLQQQ), 3657 to 3776 (SERF…EERE), and 3800 to 3912 (ASVP…PTQI). 2 stretches are compositionally biased toward basic and acidic residues: residues 2402–2413 (VEEKSEAEEPTK) and 2433–2488 (EKDK…EKPT). Residues 2504-2523 (NCDNHQQNNNSNSKASNDQQ) show a composition bias toward low complexity. The segment covering 3657–3703 (SERFRKESERDPFPNKKQKRDSQKIKEKEHPQPESEKETSTENDKPS) has biased composition (basic and acidic residues). Residues 3706 to 3721 (SMESSGNAEQATDSTK) show a composition bias toward polar residues. The span at 3741-3751 (SDDETELEDEL) shows a compositional bias: acidic residues. Residues 3766–3776 (TAQDRVNEERE) are compositionally biased toward basic and acidic residues. Residues 3865 to 3877 (PKTSQTNGSQQNE) show a composition bias toward polar residues. Residues 3878 to 3912 (SPPAATSADTAPANPSPAPAAAVASTSQAASPTQI) are compositionally biased toward low complexity.

It belongs to the peptidase C19 family. Interacts with Myc and ago.

It is found in the nucleus. It catalyses the reaction Thiol-dependent hydrolysis of ester, thioester, amide, peptide and isopeptide bonds formed by the C-terminal Gly of ubiquitin (a 76-residue protein attached to proteins as an intracellular targeting signal).. Ubiquitin hydrolase that can remove conjugated ubiquitin from target proteins and polyubiquitin chains. Essential for Myc-mediated cell growth and proliferation in developing eyes and wings. In the wing and eye, the deubiquitinating activity acts as an antagonist to the SCF E3 ubiquitin-protein ligase member archipelago (ago) to regulate Myc and CycE stability and thus control cell growth and proliferation. Also appears to regulate ago by modulating its induction by Myc. May also promote cell apoptosis in the wing imaginal disk, acting in an apoptotic pathway that appears to be largely independent of Myc. Required for preventing the activation of the immune deficiency (Imd) and Toll signaling cascades under unchallenged conditions. Also appears to be involved in modulating the differential expression of certain antimicrobial peptides (AMP) in response to infection by either Gram-positive or Gram-negative bacteria. Involved in the regulation of DNA damage repair pathways, including euchromatic site-specific double strand break (DSB) repair. This is Ubiquitin carboxyl-terminal hydrolase puf from Drosophila melanogaster (Fruit fly).